Reading from the N-terminus, the 464-residue chain is Propanal dehydrogenase (CoA-propanoylating) (464 aa).

The interval 1–18 (MNTSELETLIRTILSEQL) is targets protein to the BMC.

The protein belongs to the EutE/PduP family. In terms of assembly, interacts with BMC shell proteins PduA and PduJ, which target this protein to BMC. Interacts with PduQ, probably via the N-terminus of PduQ. Interacts with PduK, probably with its BMC-containing N-terminus.

The protein localises to the bacterial microcompartment. The catalysed reaction is propanal + NAD(+) + CoA = propanoyl-CoA + NADH + H(+). The protein operates within polyol metabolism; 1,2-propanediol degradation. Functionally, a CoA-acylating aldehyde dehydrogenase required for optimal 1,2-propanediol (1,2-PD) degradation. Optimizes growth in the bacterial microcompartment (BMC) dedicated to 1,2-PD degradation by minimizing propionaldehyde toxicity. Directly targeted to the BMC. NAD(+) and NADH are regenerated internally within the Pdu BMC by the PduP and PduQ enzymes, which reduce NAD(+) and oxidize NADH respectively, although there must also be cofactor transport across the BMC. The 1,2-PD-specific bacterial microcompartment (BMC) concentrates low levels of 1,2-PD catabolic enzymes, concentrates volatile reaction intermediates thus enhancing pathway flux and keeps the level of toxic, mutagenic propionaldehyde low. The protein is Propanal dehydrogenase (CoA-propanoylating) of Salmonella typhimurium (strain LT2 / SGSC1412 / ATCC 700720).